The primary structure comprises 356 residues: UDP-N-acetylglucosamine--N-acetylmuramyl-(pentapeptide) pyrophosphoryl-undecaprenol N-acetylglucosamine transferase (356 aa).

UDP-N-acetyl-alpha-D-glucosamine is bound by residues Thr11–Gly13, Asn123, Arg159, Ser187, Ile241, Ala260–Glu265, and Gln286.

It belongs to the glycosyltransferase 28 family. MurG subfamily.

The protein localises to the cell inner membrane. It catalyses the reaction di-trans,octa-cis-undecaprenyl diphospho-N-acetyl-alpha-D-muramoyl-L-alanyl-D-glutamyl-meso-2,6-diaminopimeloyl-D-alanyl-D-alanine + UDP-N-acetyl-alpha-D-glucosamine = di-trans,octa-cis-undecaprenyl diphospho-[N-acetyl-alpha-D-glucosaminyl-(1-&gt;4)]-N-acetyl-alpha-D-muramoyl-L-alanyl-D-glutamyl-meso-2,6-diaminopimeloyl-D-alanyl-D-alanine + UDP + H(+). It participates in cell wall biogenesis; peptidoglycan biosynthesis. Cell wall formation. Catalyzes the transfer of a GlcNAc subunit on undecaprenyl-pyrophosphoryl-MurNAc-pentapeptide (lipid intermediate I) to form undecaprenyl-pyrophosphoryl-MurNAc-(pentapeptide)GlcNAc (lipid intermediate II). The sequence is that of UDP-N-acetylglucosamine--N-acetylmuramyl-(pentapeptide) pyrophosphoryl-undecaprenol N-acetylglucosamine transferase from Azoarcus sp. (strain BH72).